A 173-amino-acid polypeptide reads, in one-letter code: Protein PLASTID REDOX INSENSITIVE 2, chloroplastic (173 aa).

The transit peptide at 1–55 (MATRAWVAAAVALNPQLLPLRSCSPTKSVSPAQRSASMGLRLRSGRPCLGKFVCR) directs the protein to the chloroplast.

Its subcellular location is the plastid. It is found in the chloroplast stroma. The protein resides in the chloroplast nucleoid. Functionally, required for the activity of the plastid-encoded RNA polymerase (PEP) and full expression of genes transcribed by PEP. The chain is Protein PLASTID REDOX INSENSITIVE 2, chloroplastic from Zea mays (Maize).